A 347-amino-acid polypeptide reads, in one-letter code: uncharacterized protein (347 aa).

It localises to the cytoplasm. The protein localises to the nucleus. This is an uncharacterized protein from Schizosaccharomyces pombe (strain 972 / ATCC 24843) (Fission yeast).